Consider the following 388-residue polypeptide: Na(+)/H(+) antiporter NhaA (388 aa).

The Cytoplasmic segment spans residues 1–11 (MKHLHRFFSSD). Residues 12-31 (ASGGIILIIAAILAMIMANS) form a helical membrane-spanning segment. Residues 32–58 (GATSGWYHDFLETPVQLRVGSLEINKN) are Periplasmic-facing. The interval 45–58 (PVQLRVGSLEINKN) is important for dimerization. Residues 59–80 (MLLWINDALMAVFFLLVGLEVK) traverse the membrane as a helical segment. The Cytoplasmic segment spans residues 81 to 96 (RELMQGSLASLRQAAF). Residues 97–116 (PVIAAIGGMIVPALLYLAFN) form a helical membrane-spanning segment. Over 117–122 (YADPIT) the chain is Periplasmic. A helical membrane pass occupies residues 123–130 (REGWAIPA). Residues 131–154 (ATDIAFALGVLALLGSRVPLALKI) lie on the Cytoplasmic side of the membrane. A helical membrane pass occupies residues 155–176 (FLMALAIIDDLGAIIIIALFYT). Residues 177 to 180 (NDLS) are Periplasmic-facing. Residues 181–200 (MASLGVAAVAIAVLAVLNLC) traverse the membrane as a helical segment. The Cytoplasmic portion of the chain corresponds to 201-204 (GARR). Residues 205–222 (TGVYILVGVVLWTAVLKS) form a helical membrane-spanning segment. G223 is a topological domain (periplasmic). The helical transmembrane segment at 224-236 (VHATLAGVIVGFF) threads the bilayer. At 237–253 (IPLKEKHGRSPAKRLEH) the chain is on the cytoplasmic side. Residues 254-272 (VLHPWVAYLILPLFAFANA) traverse the membrane as a helical segment. Topologically, residues 273-286 (GVSLQGVTLDGLTS) are periplasmic. A helical transmembrane segment spans residues 287–310 (ILPLGIIAGLLIGKPLGISLFCWL). Residues 311 to 339 (ALRLKLAHLPEGTTYQQIMVVGILCGIGF) lie on the Cytoplasmic side of the membrane. Residues 340–350 (TMSIFIASLAF) traverse the membrane as a helical segment. Residues 351 to 357 (GSVDPEL) lie on the Periplasmic side of the membrane. The chain crosses the membrane as a helical span at residues 358–380 (INWAKLGILVGSISSAVIGYSWL). At 381–388 (RVRLRPSV) the chain is on the cytoplasmic side.

The protein belongs to the NhaA Na(+)/H(+) (TC 2.A.33) antiporter family. Monomer. Homodimer. Under routine stress conditions, the monomeric form is fully functional. However, the dimeric form is much more efficient in conferring growth resistance under extreme stress conditions.

The protein resides in the cell inner membrane. It carries out the reaction Na(+)(in) + 2 H(+)(out) = Na(+)(out) + 2 H(+)(in). It catalyses the reaction Li(+)(in) + 2 H(+)(out) = Li(+)(out) + 2 H(+)(in). Its activity is regulated as follows. Activity is regulated by pH. Active at alkaline pH. Activity is strongly down-regulated below pH 6.5 and a dramatic increase in activity is observed upon increase of the pH from 6.5 to 8.5. In terms of biological role, na(+)/H(+) antiporter that extrudes sodium in exchange for external protons. Plays an important role in the regulation of intracellular pH, cellular Na(+) content and cell volume. Catalyzes the exchange of 2 H(+) per Na(+). This stoichiometry applies at both neutral and alkaline pH values. In addition, can also transport lithium and is involved in lithium detoxification. Binding of the Li(+) and H(+) ligands to NhaA is coupled and antagonistic. The protein is Na(+)/H(+) antiporter NhaA of Escherichia coli (strain K12).